A 225-amino-acid chain; its full sequence is Ras-related protein Rab-21 (225 aa).

At Ala2 the chain carries N-acetylalanine. GTP-binding residues include Gly28, Gly31, Lys32, Thr33, Ser34, Asn45, Asp46, His48, Thr50, and Thr51. Thr33 is a binding site for Mg(2+). The Switch 1 signature appears at 43-56; sequence KFNDKHITTLQASF. Positions 51 and 74 each coordinate Mg(2+). The Switch 2 motif lies at 76-94; that stretch reads AGQERFHALGPIYYRDSNG. GTP is bound by residues Gly77, Asn132, Lys133, Asp135, Ala163, and Lys164. Residues 188 to 225 form a disordered region; it reads ERAKGNGSSQPGTARRGVQIIDDEPQAQTSGGGCCSSG. Residues Cys221 and Cys222 are each lipidated (S-geranylgeranyl cysteine). A Cysteine methyl ester modification is found at Cys222. The propeptide at 223-225 is removed in mature form; sequence SSG.

Belongs to the small GTPase superfamily. Rab family. In terms of assembly, interacts with the cytoplasmic tail of integrins ITGA1, ITGA2, ITGA5, ITGA6, ITGA11 and ITGB1. Interacts with RABGEF1 (via VPS9 domain). Interacts with ANKRD27. Interacts with VAMP7. Interacts (in GTP-bound form) with VAMP8 in response to starvation; the interaction probably regulates VAMP8 endolysosomal trafficking. Interacts (active GTP-bound form) with TMED10; the interaction is indirect and regulates TMED10 abundance and localization at the Golgi. Mg(2+) is required as a cofactor. As to expression, widely expressed. In jejunal tissue, predominantly expressed in the apical region of the epithelial cell layer of the villi, weak expression, if any, in the crypt epithelium. Capillary endothelium and some cell types in the lamina propria also show expression.

The protein localises to the endoplasmic reticulum membrane. It localises to the golgi apparatus. The protein resides in the trans-Golgi network. Its subcellular location is the golgi apparatus membrane. It is found in the early endosome membrane. The protein localises to the cytoplasmic vesicle membrane. It localises to the cleavage furrow. The protein resides in the cell projection. Its subcellular location is the neuron projection. It carries out the reaction GTP + H2O = GDP + phosphate + H(+). With respect to regulation, regulated by guanine nucleotide exchange factors (GEFs) including ANKRD27 and RABGEF1, which promote the exchange of bound GDP for free GTP. Regulated by GTPase activating proteins (GAPs) which increase the GTP hydrolysis activity. Inhibited by GDP dissociation inhibitors (GDIs). Its function is as follows. The small GTPases Rab are key regulators of intracellular membrane trafficking, from the formation of transport vesicles to their fusion with membranes. Rabs cycle between an inactive GDP-bound form and an active GTP-bound form that is able to recruit to membranes different sets of downstream effectors directly responsible for vesicle formation, movement, tethering and fusion. RAB21 is involved in membrane trafficking control. During the mitosis of adherent cells, controls the endosomal trafficking of integrins which is required for the successful completion of cytokinesis. Regulates integrin internalization and recycling, but does not influence the traffic of endosomally translocated receptors in general. As a result, may regulate cell adhesion and migration. Involved in neurite growth. Following SBF2/MTMT13-mediated activation in response to starvation-induced autophagy, binds to and regulates SNARE protein VAMP8 endolysosomal transport required for SNARE-mediated autophagosome-lysosome fusion. Modulates protein levels of the cargo receptors TMED2 and TMED10, and required for appropriate Golgi localization of TMED10. This is Ras-related protein Rab-21 from Homo sapiens (Human).